The sequence spans 146 residues: Hemoglobin subunit beta (146 aa).

Position 1 is an N-acetylvaline (valine 1). Residues 2–146 (HLTDAEKALV…VATALAHKYH (145 aa)) enclose the Globin domain. Threonine 12 bears the Phosphothreonine mark. Phosphoserine is present on serine 44. Lysine 59 is modified (N6-acetyllysine). Histidine 63 serves as a coordination point for heme b. N6-acetyllysine is present on lysine 82. Histidine 92 is a heme b binding site. Cysteine 93 carries the post-translational modification S-nitrosocysteine. The residue at position 144 (lysine 144) is an N6-acetyllysine.

It belongs to the globin family. In terms of assembly, heterotetramer of two alpha chains and two beta chains. As to expression, red blood cells.

Involved in oxygen transport from the lung to the various peripheral tissues. This chain is Hemoglobin subunit beta, found in Peromyscus californicus (California mouse).